The primary structure comprises 229 residues: NAD-dependent protein deacetylase (229 aa).

The Deacetylase sirtuin-type domain maps to 1–229 (MNNLKEAIKQ…NDAVKVFAEI (229 aa)). NAD(+) contacts are provided by A20, R32, Q96, I98, D99, H114, T181, S182, N205, and V223. Positions 98 and 99 each coordinate nicotinamide. The active-site Proton acceptor is the H114.

It belongs to the sirtuin family. Class U subfamily.

It is found in the cytoplasm. It carries out the reaction N(6)-acetyl-L-lysyl-[protein] + NAD(+) + H2O = 2''-O-acetyl-ADP-D-ribose + nicotinamide + L-lysyl-[protein]. Its function is as follows. NAD-dependent protein deacetylase which modulates the activities of several enzymes which are inactive in their acetylated form. The protein is NAD-dependent protein deacetylase of Listeria innocua serovar 6a (strain ATCC BAA-680 / CLIP 11262).